The sequence spans 584 residues: 2-succinyl-5-enolpyruvyl-6-hydroxy-3-cyclohexene-1-carboxylate synthase (584 aa).

It belongs to the TPP enzyme family. MenD subfamily. In terms of assembly, homodimer. Mg(2+) is required as a cofactor. Requires Mn(2+) as cofactor. It depends on thiamine diphosphate as a cofactor.

The enzyme catalyses isochorismate + 2-oxoglutarate + H(+) = 5-enolpyruvoyl-6-hydroxy-2-succinyl-cyclohex-3-ene-1-carboxylate + CO2. It participates in quinol/quinone metabolism; 1,4-dihydroxy-2-naphthoate biosynthesis; 1,4-dihydroxy-2-naphthoate from chorismate: step 2/7. The protein operates within quinol/quinone metabolism; menaquinone biosynthesis. In terms of biological role, catalyzes the thiamine diphosphate-dependent decarboxylation of 2-oxoglutarate and the subsequent addition of the resulting succinic semialdehyde-thiamine pyrophosphate anion to isochorismate to yield 2-succinyl-5-enolpyruvyl-6-hydroxy-3-cyclohexene-1-carboxylate (SEPHCHC). The chain is 2-succinyl-5-enolpyruvyl-6-hydroxy-3-cyclohexene-1-carboxylate synthase from Bacillus cereus (strain ZK / E33L).